A 198-amino-acid chain; its full sequence is dITP/XTP pyrophosphatase (198 aa).

7-12 (THNPHK) lines the substrate pocket. Positions 40 and 69 each coordinate Mg(2+). D69 serves as the catalytic Proton acceptor. Residues T70, 151–154 (FGYD), K174, and 179–180 (HR) contribute to the substrate site.

The protein belongs to the HAM1 NTPase family. As to quaternary structure, homodimer. The cofactor is Mg(2+).

The catalysed reaction is XTP + H2O = XMP + diphosphate + H(+). It catalyses the reaction dITP + H2O = dIMP + diphosphate + H(+). It carries out the reaction ITP + H2O = IMP + diphosphate + H(+). Functionally, pyrophosphatase that catalyzes the hydrolysis of nucleoside triphosphates to their monophosphate derivatives, with a high preference for the non-canonical purine nucleotides XTP (xanthosine triphosphate), dITP (deoxyinosine triphosphate) and ITP. Seems to function as a house-cleaning enzyme that removes non-canonical purine nucleotides from the nucleotide pool, thus preventing their incorporation into DNA/RNA and avoiding chromosomal lesions. The sequence is that of dITP/XTP pyrophosphatase from Thermoanaerobacter pseudethanolicus (strain ATCC 33223 / 39E) (Clostridium thermohydrosulfuricum).